We begin with the raw amino-acid sequence, 230 residues long: MASKHNADLSSAAMLAALLLCALGAPVEYEPTDSPAGDFSGEEQEVTPDLLSASPVWDLIIGVTAHHQKEFEDEFQQEVKYRFLNHYKLSSLPADCPSANFSKEACLQRLAEGLHTYMVLFKHVEKEYPSSSILLHARYHSGALIGLIKEKMRNPGQVTVPTSRQEQQLLQDMDNPSTFHRKMTAHNILRQLHNFLRNGKVAIRKREMPKQKRRKDDGIIPPIHPSYQMT.

Residues 1-24 form the signal peptide; it reads MASKHNADLSSAAMLAALLLCALG. A disulfide bridge links Cys-96 with Cys-106. N-linked (GlcNAc...) asparagine glycosylation is present at Asn-100. Over residues 206–218 the composition is skewed to basic and acidic residues; sequence REMPKQKRRKDDG. The disordered stretch occupies residues 206 to 230; the sequence is REMPKQKRRKDDGIIPPIHPSYQMT.

The protein belongs to the IL-6 superfamily. Component of a hexamer of two molecules each of IL6, IL6R and IL6ST; first binds to IL6R to associate with the signaling subunit IL6ST. In terms of tissue distribution, expressed in kidney and spleen. Low expression in liver and gills.

It localises to the secreted. Cytokine with a wide variety of biological functions in immunity, tissue regeneration, and metabolism. Binds to IL6R, then the complex associates to the signaling subunit IL6ST/gp130 to trigger the intracellular IL6-signaling pathway. The interaction with the membrane-bound IL6R and IL6ST stimulates 'classic signaling', whereas the binding of IL6 and soluble IL6R to IL6ST stimulates 'trans-signaling'. Alternatively, 'cluster signaling' occurs when membrane-bound IL6:IL6R complexes on transmitter cells activate IL6ST receptors on neighboring receiver cells. In Paralichthys olivaceus (Bastard halibut), this protein is Interleukin-6 (il6).